Reading from the N-terminus, the 156-residue chain is Cytochrome c-type biogenesis protein CcmE 2 (156 aa).

At 1–8 the chain is on the cytoplasmic side; it reads MNPQRRRR. A helical; Signal-anchor for type II membrane protein membrane pass occupies residues 9 to 29; sequence LWLVLALVLAGGLATTLVAMA. Residues 30–156 are Periplasmic-facing; sequence LQRNVAYLYT…AAAGQVGERQ (127 aa). Positions 123 and 127 each coordinate heme. Residues 136 to 156 are disordered; it reads MGSAHRKHDVPAAAGQVGERQ.

Belongs to the CcmE/CycJ family.

It localises to the cell inner membrane. Its function is as follows. Heme chaperone required for the biogenesis of c-type cytochromes. Transiently binds heme delivered by CcmC and transfers the heme to apo-cytochromes in a process facilitated by CcmF and CcmH. The chain is Cytochrome c-type biogenesis protein CcmE 2 from Xanthomonas axonopodis pv. citri (strain 306).